Consider the following 1370-residue polypeptide: DNA-directed RNA polymerase subunit beta (1370 aa).

It belongs to the RNA polymerase beta chain family. In terms of assembly, the RNAP catalytic core consists of 2 alpha, 1 beta, 1 beta' and 1 omega subunit. When a sigma factor is associated with the core the holoenzyme is formed, which can initiate transcription.

The enzyme catalyses RNA(n) + a ribonucleoside 5'-triphosphate = RNA(n+1) + diphosphate. Functionally, DNA-dependent RNA polymerase catalyzes the transcription of DNA into RNA using the four ribonucleoside triphosphates as substrates. This is DNA-directed RNA polymerase subunit beta from Geotalea daltonii (strain DSM 22248 / JCM 15807 / FRC-32) (Geobacter daltonii).